The sequence spans 307 residues: UDP-3-O-acyl-N-acetylglucosamine deacetylase (307 aa).

Zn(2+)-binding residues include His-78, His-241, and Asp-245. His-268 functions as the Proton donor in the catalytic mechanism.

Belongs to the LpxC family. The cofactor is Zn(2+).

The catalysed reaction is a UDP-3-O-[(3R)-3-hydroxyacyl]-N-acetyl-alpha-D-glucosamine + H2O = a UDP-3-O-[(3R)-3-hydroxyacyl]-alpha-D-glucosamine + acetate. It participates in glycolipid biosynthesis; lipid IV(A) biosynthesis; lipid IV(A) from (3R)-3-hydroxytetradecanoyl-[acyl-carrier-protein] and UDP-N-acetyl-alpha-D-glucosamine: step 2/6. Catalyzes the hydrolysis of UDP-3-O-myristoyl-N-acetylglucosamine to form UDP-3-O-myristoylglucosamine and acetate, the committed step in lipid A biosynthesis. This is UDP-3-O-acyl-N-acetylglucosamine deacetylase from Polaromonas sp. (strain JS666 / ATCC BAA-500).